A 481-amino-acid chain; its full sequence is UDP-N-acetylmuramate--L-alanine ligase (481 aa).

Position 135–141 (135–141 (GTHGKTT)) interacts with ATP.

This sequence belongs to the MurCDEF family.

The protein localises to the cytoplasm. It carries out the reaction UDP-N-acetyl-alpha-D-muramate + L-alanine + ATP = UDP-N-acetyl-alpha-D-muramoyl-L-alanine + ADP + phosphate + H(+). Its pathway is cell wall biogenesis; peptidoglycan biosynthesis. Its function is as follows. Cell wall formation. This is UDP-N-acetylmuramate--L-alanine ligase from Nostoc punctiforme (strain ATCC 29133 / PCC 73102).